Here is a 98-residue protein sequence, read N- to C-terminus: DNA-binding protein Fis (98 aa).

The segment at residues 74–93 is a DNA-binding region (H-T-H motif); it reads QTRAATMLGINRGTLRKKLK.

Belongs to the transcriptional regulatory Fis family. As to quaternary structure, homodimer.

Its function is as follows. Activates ribosomal RNA transcription. Plays a direct role in upstream activation of rRNA promoters. The protein is DNA-binding protein Fis of Haemophilus ducreyi (strain 35000HP / ATCC 700724).